The primary structure comprises 373 residues: Heterogeneous nuclear ribonucleoprotein A3 homolog 1 (373 aa).

A disordered region spans residues 1 to 25; it reads MPRGGMDDHWPSSDDQGHDPKEPEQ. 2 RRM domains span residues 27-110 and 118-206; these read RKLF…DSAR and KKIF…SAQR. 2 disordered regions span residues 196–218 and 319–373; these read KQEM…FMGR and DFGN…GRRF. The segment covering 207 to 218 has biased composition (gly residues); it reads GRGGGGSNFMGR. Residues 319–333 are compositionally biased toward low complexity; the sequence is DFGNYGGQQQSNYGP. Over residues 334 to 373 the composition is skewed to gly residues; that stretch reads MKGGSFSGRSSGGSGSGPYGGGYGSGGGGGGGGSYGGRRF.

The protein resides in the nucleus. This is Heterogeneous nuclear ribonucleoprotein A3 homolog 1 from Xenopus laevis (African clawed frog).